The chain runs to 394 residues: Phosphoglycerate kinase (394 aa).

Substrate-binding positions include 21–23 (DFN), R37, 60–63 (HLGR), R119, and R152. ATP is bound by residues K202, G293, E324, and 350–353 (GGDS).

The protein belongs to the phosphoglycerate kinase family. As to quaternary structure, monomer.

It localises to the cytoplasm. The enzyme catalyses (2R)-3-phosphoglycerate + ATP = (2R)-3-phospho-glyceroyl phosphate + ADP. The protein operates within carbohydrate degradation; glycolysis; pyruvate from D-glyceraldehyde 3-phosphate: step 2/5. The sequence is that of Phosphoglycerate kinase from Caldanaerobacter subterraneus subsp. tengcongensis (strain DSM 15242 / JCM 11007 / NBRC 100824 / MB4) (Thermoanaerobacter tengcongensis).